A 189-amino-acid polypeptide reads, in one-letter code: FUN14 domain-containing protein 2 (189 aa).

Residues 1 to 80 (METSAPRAGS…GQESGPSAEK (80 aa)) lie on the Cytoplasmic side of the membrane. Serine 10 and serine 53 each carry phosphoserine. The chain crosses the membrane as a helical span at residues 81–101 (YSVATQLFIGGVTGWCTGFIF). The Mitochondrial intermembrane segment spans residues 102–107 (QNVGKL). The chain crosses the membrane as a helical span at residues 108–128 (AATAVGGGFFLLQLANHTGYI). Residues 129-164 (KVDWQRVEKDMKKAKEQLKIRKSNQMPTEVRSKAEE) lie on the Cytoplasmic side of the membrane. Position 151 is a phosphoserine (serine 151). Residues 165–185 (VVSFVKKNVLVTGGFFGGFLL) traverse the membrane as a helical segment. The Mitochondrial intermembrane segment spans residues 186 to 189 (GMAS).

Belongs to the FUN14 family.

The protein resides in the mitochondrion outer membrane. The protein localises to the nucleus. In terms of biological role, binds directly and specifically 1,2-Diacyl-sn-glycero-3-phospho-(1'-myo-inositol-3',4',5'-bisphosphate) (PIP3) leading to the recruitment of PIP3 to mitochondria and may play a role in the regulation of the platelet activation via AKT/GSK3B/cGMP signaling pathways. May act as transcription factor that regulates SREBP1 (isoform SREBP-1C) expression in order to modulate triglyceride (TG) homeostasis in hepatocytes. This Macaca mulatta (Rhesus macaque) protein is FUN14 domain-containing protein 2.